A 239-amino-acid polypeptide reads, in one-letter code: Small ribosomal subunit protein eS1 (239 aa).

Residues 1-24 (MAIQPPGSYPQGNKKGKAKKKSGQ) are disordered.

This sequence belongs to the eukaryotic ribosomal protein eS1 family. Component of the small ribosomal subunit. Mature ribosomes consist of a small (40S) and a large (60S) subunit. The 40S subunit contains about 33 different proteins and 1 molecule of RNA (18S). The 60S subunit contains about 49 different proteins and 3 molecules of RNA (25S, 5.8S and 5S).

Its subcellular location is the cytoplasm. The polypeptide is Small ribosomal subunit protein eS1 (Encephalitozoon cuniculi (strain GB-M1) (Microsporidian parasite)).